Reading from the N-terminus, the 439-residue chain is UDP-N-acetylglucosamine--peptide N-acetylglucosaminyltransferase stabilizing protein GtfB (439 aa).

Belongs to the GtfB family. As to quaternary structure, interacts with glycosyltransferase GtfA (Gtf2); probably forms a heterotetramer with 2 subunits each of GtfA and GtfB. Part of the accessory SecA2/SecY2 protein translocation apparatus.

Its subcellular location is the cell membrane. It functions in the pathway protein modification; protein glycosylation. Required for the polymorphic O-glycosylation of the serine-rich repeat protein Fap1. A stabilizing protein that is part of the accessory SecA2/SecY2 system specifically required to export Fap1, a serine-rich fimbrial adhesin encoded upstream in the same operon. The GtfA-GtfB (Gtf1-Gtf2 in this bacteria) complex adds GlcNAc from UDP-GlcNAc to Fap1, attaching the first sugar residue. Cannot use not UDP-Glc as substrate. Stabilizes the glycosylation activity of GtfA, causing it to partially localize to the cellular membrane where it is more protease resistant. This chain is UDP-N-acetylglucosamine--peptide N-acetylglucosaminyltransferase stabilizing protein GtfB, found in Streptococcus parasanguinis.